Reading from the N-terminus, the 219-residue chain is Protein YNG1 (219 aa).

Residues 155-204 form a PHD-type; degenerate zinc finger; sequence EVYCFCRNVSYGPMVACDNPACPFEWFHYGCVGLKQAPKGKWYCSKDCKE. Positions 158, 160, 171, 176, 182, 185, 198, and 202 each coordinate Zn(2+).

The protein belongs to the ING family. In terms of assembly, component of the NuA3 histone acetyltransferase (HAT) complex. The NuA3 HAT complex has 2 functionally distinct forms that participate in transcription. The NuA3a HAT complex is composed of at least NTO1, SAS3, TAF14, YNG1 and EAF6. The NuA3b HAT complex contains an additional subunit, PDP3. Interacts with H3K4me3 and to a lesser extent with H3K4me2.

Its subcellular location is the nucleus. In terms of biological role, histone-binding component of the NuA3a histone acetyltransferase complex. Targets the NuA3a HAT complex via histone H3K4me3 to facilitate transcription initiation at promoter regions. SAS3 then acetylates H3K14, leading to transcription initiation at a subset of genes. YNG1 is required for the HAT activity of NuA3 but not for its integrity. Mediates the interaction of SAS3 with nucleosomes. This chain is Protein YNG1 (YNG1), found in Saccharomyces cerevisiae (strain ATCC 204508 / S288c) (Baker's yeast).